Reading from the N-terminus, the 123-residue chain is Small ribosomal subunit protein uS13 (123 aa).

This sequence belongs to the universal ribosomal protein uS13 family. Part of the 30S ribosomal subunit. Forms a loose heterodimer with protein S19. Forms two bridges to the 50S subunit in the 70S ribosome.

Located at the top of the head of the 30S subunit, it contacts several helices of the 16S rRNA. In the 70S ribosome it contacts the 23S rRNA (bridge B1a) and protein L5 of the 50S subunit (bridge B1b), connecting the 2 subunits; these bridges are implicated in subunit movement. Contacts the tRNAs in the A and P-sites. This is Small ribosomal subunit protein uS13 from Anaplasma marginale (strain St. Maries).